The chain runs to 151 residues: Pseudo histidine-containing phosphotransfer protein 2 (151 aa).

The region spanning 38–133 (SPNFVEEVAA…ATLKQKLESY (96 aa)) is the HPt domain.

Functions as a two-component phosphorelay mediator between cytokinin sensor histidine kinases and response regulators (B-type ARRs). Plays an important role in propagating cytokinin signal transduction. This chain is Pseudo histidine-containing phosphotransfer protein 2, found in Oryza sativa subsp. japonica (Rice).